We begin with the raw amino-acid sequence, 482 residues long: Class E basic helix-loop-helix protein 41 (482 aa).

Lysine 31 is covalently cross-linked (Glycyl lysine isopeptide (Lys-Gly) (interchain with G-Cter in SUMO2)). In terms of domain architecture, bHLH spans 44–99 (TYKLPHRLIEKKRRDRINECIAQLKDLLPEHLKLTTLGHLEKAVVLELTLKHLKAL). A necessary for interaction with RXRA and repressor activity towards RXRA region spans residues 67-71 (LKDLL). A Glycyl lysine isopeptide (Lys-Gly) (interchain with G-Cter in SUMO2) cross-link involves residue lysine 121. Positions 131 to 166 (FHSGFQTCAKEVLQYLSRFESWTPREPRCVQLINHL) constitute an Orange domain. Lysine 210 is covalently cross-linked (Glycyl lysine isopeptide (Lys-Gly) (interchain with G-Cter in SUMO2)). Disordered regions lie at residues 228-298 (AELA…GGAA) and 438-482 (VAPL…KEAP). The span at 246–256 (AEARPDREKGK) shows a compositional bias: basic and acidic residues. A Glycyl lysine isopeptide (Lys-Gly) (interchain with G-Cter in SUMO2) cross-link involves residue lysine 266. Positions 285 to 297 (RGGGSGGGPGGGA) are enriched in gly residues.

As to quaternary structure, homodimer. Heterodimer with BHLHE40/DEC1. Interacts with CIART and BMAL1. Interacts with RXRA. Interacts with NR0B2 and HNF1A. In terms of tissue distribution, highly expressed in skeletal muscle and brain, moderately expressed in pancreas and heart, weakly expressed in placenta, lung, liver and kidney.

The protein localises to the nucleus. Functionally, transcriptional repressor involved in the regulation of the circadian rhythm by negatively regulating the activity of the clock genes and clock-controlled genes. Acts as the negative limb of a novel autoregulatory feedback loop (DEC loop) which differs from the one formed by the PER and CRY transcriptional repressors (PER/CRY loop). Both these loops are interlocked as it represses the expression of PER1 and in turn is repressed by PER1/2 and CRY1/2. Represses the activity of the circadian transcriptional activator: CLOCK-BMAL1 heterodimer by competing for the binding to E-box elements (5'-CACGTG-3') found within the promoters of its target genes. Negatively regulates its own expression and the expression of DBP and BHLHE41/DEC2. Acts as a corepressor of RXR and the RXR-LXR heterodimers and represses the ligand-induced RXRA/B/G, NR1H3/LXRA, NR1H4 and VDR transactivation activity. Inhibits HNF1A-mediated transactivation of CYP1A2, CYP2E1 AND CYP3A11. The polypeptide is Class E basic helix-loop-helix protein 41 (Homo sapiens (Human)).